Reading from the N-terminus, the 354-residue chain is MIETDKLAAERIIAATPSSSHEEVFERALRPRQLDDYVGQEKVRGQLEIFIEAAKRRSEPLDHVLLFGPPGLGKTTLAHIIAREMGVNLRQTSGPVLERAGDLAALLTNLEANDVLFIDEIHRLSPVVEEILYPALEDYQIDIMIGEGPAARSVKLDLQPFTLVGATTRAGMLTNPLRDRFGIVARLEFYDADQLARIVRRSASLLNAHIDPSGALEIAKRSRGTPRIANRLLRRVRDFAEVKADGQITAAVADAALAMLDVDPVGFDLMDRKLLEAILHKFDGGPVGIDNLAAAIGEERDTIEDVLEPYLIQQGFLQRTPRGRVATLLTYRHFGLSAPDAGNERGMWDTPAGK.

The segment at 4–190 (TDKLAAERII…FGIVARLEFY (187 aa)) is large ATPase domain (RuvB-L). Residues leucine 29, arginine 30, glycine 71, lysine 74, threonine 75, threonine 76, 137-139 (EDY), arginine 180, tyrosine 190, and arginine 227 each bind ATP. Threonine 75 lines the Mg(2+) pocket. Positions 191–261 (DADQLARIVR…VADAALAMLD (71 aa)) are small ATPAse domain (RuvB-S). Positions 264–354 (PVGFDLMDRK…RGMWDTPAGK (91 aa)) are head domain (RuvB-H). The DNA site is built by arginine 300, arginine 319, and arginine 324.

It belongs to the RuvB family. As to quaternary structure, homohexamer. Forms an RuvA(8)-RuvB(12)-Holliday junction (HJ) complex. HJ DNA is sandwiched between 2 RuvA tetramers; dsDNA enters through RuvA and exits via RuvB. An RuvB hexamer assembles on each DNA strand where it exits the tetramer. Each RuvB hexamer is contacted by two RuvA subunits (via domain III) on 2 adjacent RuvB subunits; this complex drives branch migration. In the full resolvosome a probable DNA-RuvA(4)-RuvB(12)-RuvC(2) complex forms which resolves the HJ.

Its subcellular location is the cytoplasm. It carries out the reaction ATP + H2O = ADP + phosphate + H(+). Its function is as follows. The RuvA-RuvB-RuvC complex processes Holliday junction (HJ) DNA during genetic recombination and DNA repair, while the RuvA-RuvB complex plays an important role in the rescue of blocked DNA replication forks via replication fork reversal (RFR). RuvA specifically binds to HJ cruciform DNA, conferring on it an open structure. The RuvB hexamer acts as an ATP-dependent pump, pulling dsDNA into and through the RuvAB complex. RuvB forms 2 homohexamers on either side of HJ DNA bound by 1 or 2 RuvA tetramers; 4 subunits per hexamer contact DNA at a time. Coordinated motions by a converter formed by DNA-disengaged RuvB subunits stimulates ATP hydrolysis and nucleotide exchange. Immobilization of the converter enables RuvB to convert the ATP-contained energy into a lever motion, pulling 2 nucleotides of DNA out of the RuvA tetramer per ATP hydrolyzed, thus driving DNA branch migration. The RuvB motors rotate together with the DNA substrate, which together with the progressing nucleotide cycle form the mechanistic basis for DNA recombination by continuous HJ branch migration. Branch migration allows RuvC to scan DNA until it finds its consensus sequence, where it cleaves and resolves cruciform DNA. This is Holliday junction branch migration complex subunit RuvB from Burkholderia ambifaria (strain MC40-6).